A 276-amino-acid chain; its full sequence is Rhomboid protease GlpG (276 aa).

6 helical membrane-spanning segments follow: residues 94-114, 142-162, 169-189, 192-212, 229-249, and 250-270; these read GPVTWIVMLACVVVYIAMSLI, IFMHFSLMHILFNLLWWWYLG, LGSGKLIVITVISALLSGYVQ, FSGPWFGGLSGVVYALMGYVW, LIIFALLWIVAGWFDWFGMSM, and ANGAHIAGLIVGLAMAFVDTL. S201 functions as the Nucleophile in the catalytic mechanism. H254 is a catalytic residue.

The protein belongs to the peptidase S54 family.

The protein localises to the cell inner membrane. The enzyme catalyses Cleaves type-1 transmembrane domains using a catalytic dyad composed of serine and histidine that are contributed by different transmembrane domains.. Rhomboid-type serine protease that catalyzes intramembrane proteolysis. In Salmonella typhi, this protein is Rhomboid protease GlpG.